A 286-amino-acid polypeptide reads, in one-letter code: Nucleotide-binding protein HS_1178 (286 aa).

An ATP-binding site is contributed by 8-15; that stretch reads GRSGAGKS. 56–59 is a GTP binding site; sequence DIRN.

The protein belongs to the RapZ-like family.

Its function is as follows. Displays ATPase and GTPase activities. This Histophilus somni (strain 129Pt) (Haemophilus somnus) protein is Nucleotide-binding protein HS_1178.